We begin with the raw amino-acid sequence, 313 residues long: D-apiose import binding protein (313 aa).

The first 26 residues, 1–26, serve as a signal peptide directing secretion; the sequence is MKLTRRLTLAAFASVLALGTAAPAFS. D-apiofuranose-binding positions include asparagine 39, 115 to 116, 162 to 164, arginine 168, asparagine 218, aspartate 243, and glutamine 263; these read DR and DTN.

Belongs to the bacterial solute-binding protein 2 family.

Its subcellular location is the periplasm. Functionally, part of an ABC transporter complex involved in D-apiose import. This is D-apiose import binding protein from Rhizobium rhizogenes (strain K84 / ATCC BAA-868) (Agrobacterium radiobacter).